The following is a 458-amino-acid chain: Protochlorophyllide reductase, chloroplastic (458 aa).

The protein belongs to the short-chain dehydrogenases/reductases (SDR) family. POR subfamily.

It localises to the plastid. It is found in the chloroplast. The enzyme catalyses chlorophyllide a + NADP(+) = protochlorophyllide a + NADPH + H(+). It participates in porphyrin-containing compound metabolism; chlorophyll biosynthesis. In terms of biological role, phototransformation of protochlorophyllide (Pchlide) to chlorophyllide (Chlide). The protein is Protochlorophyllide reductase, chloroplastic (PORA) of Marchantia paleacea (Liverwort).